A 229-amino-acid chain; its full sequence is Ras-related protein rab-39 (229 aa).

Residue 73–77 participates in GTP binding; the sequence is DTAGQ. Residues Cys227 and Cys229 are each lipidated (S-geranylgeranyl cysteine). Position 229 is a cysteine methyl ester (Cys229).

Belongs to the small GTPase superfamily. Rab family. As to quaternary structure, interacts (in GTP-bound form) with Ras association domain-containing protein rsf-1.

Its subcellular location is the cell membrane. It is found in the cytoplasmic vesicle membrane. The protein resides in the golgi apparatus. Functionally, small GTPases Rab involved in autophagy. The small GTPases Rab are key regulators of intracellular membrane trafficking, from the formation of transport vesicles to their fusion with membranes. Rabs cycle between an inactive GDP-bound form and an active GTP-bound form that is able to recruit to membranes different sets of downstream effectors directly responsible for vesicle formation, movement, tethering and fusion. Involved in positively regulating the oxidative stress response, perhaps in concert with the Ras association domain-containing protein rsf-1. The protein is Ras-related protein rab-39 of Caenorhabditis elegans.